The following is a 907-amino-acid chain: Putative ATP-dependent DNA helicase DDX11-like protein 8 (907 aa).

The 439-residue stretch at 9–447 folds into the Helicase ATP-binding domain; the sequence is GAIHFPFPFT…KNLMYLKQIL (439 aa). 44 to 51 contacts ATP; it reads SPTGTGKS. The segment at 202–222 is disordered; that stretch reads YESDEEKKVASGHRVDEDEDD. Residues 206–217 show a composition bias toward basic and acidic residues; it reads EEKKVASGHRVD. Phosphoserine is present on Ser-264. [4Fe-4S] cluster contacts are provided by Cys-269 and Cys-287. Residues 291–306 show a composition bias toward basic and acidic residues; it reads QRSRHEKKKGAEEEKP. Residues 291–314 form a disordered region; the sequence is QRSRHEKKKGAEEEKPKRRRQEKQ. 2 residues coordinate [4Fe-4S] cluster: Cys-317 and Cys-352. The short motif at 395-398 is the DEAH element; the sequence is DEAH.

This sequence belongs to the DEAD box helicase family. DEAH subfamily. DDX11/CHL1 sub-subfamily. [4Fe-4S] cluster is required as a cofactor.

The protein localises to the nucleus. It localises to the nucleolus. Functionally, putative DNA helicase. This is Putative ATP-dependent DNA helicase DDX11-like protein 8 (DDX11L8) from Homo sapiens (Human).